A 91-amino-acid polypeptide reads, in one-letter code: Acyl-CoA-binding domain-containing protein 2 (91 aa).

Positions 3-88 (LQEEFEEFAE…VKQLLEEASA (86 aa)) constitute an ACB domain. An acyl-CoA-binding positions include K15, 30 to 34 (YGLYK), K52, K56, and Y75.

It belongs to the ACBP family. Highly expressed in leaves. Expressed at low levels in roots and seeds.

Its subcellular location is the cytoplasm. It is found in the cytosol. Functionally, binds medium- and long-chain acyl-CoA esters with high affinity. Can interact in vitro with linolenoyl-CoA. Binds palmitoyl-CoA and linoleoyl-CoA in vitro. Binds phosphatidic acid (PA) and phosphatidylcholine (PC) in vitro. May play a role in the biosynthesis of phospholipids. The sequence is that of Acyl-CoA-binding domain-containing protein 2 from Oryza sativa subsp. japonica (Rice).